We begin with the raw amino-acid sequence, 63 residues long: Sperm protamine P1 (63 aa).

The segment at 1–63 is disordered; it reads MARYRRHSRS…RYSRRGRRRY (63 aa).

The protein belongs to the protamine P1 family. As to expression, testis.

The protein resides in the nucleus. Its subcellular location is the chromosome. Its function is as follows. Protamines substitute for histones in the chromatin of sperm during the haploid phase of spermatogenesis. They compact sperm DNA into a highly condensed, stable and inactive complex. The sequence is that of Sperm protamine P1 (PRM1) from Sminthopsis bindi (Kakadu dunnart).